Here is a 180-residue protein sequence, read N- to C-terminus: Iron sulfur cluster assembly protein 1, mitochondrial (180 aa).

Belongs to the NifU family. Component of the core Fe-S cluster (ISC) assembly machinery. Requires [2Fe-2S] cluster as cofactor.

Its subcellular location is the mitochondrion matrix. The protein operates within cofactor biosynthesis; iron-sulfur cluster biosynthesis. Its function is as follows. Scaffold protein for the de novo synthesis of iron-sulfur (Fe-S) clusters within mitochondria, which is required for maturation of both mitochondrial and cytoplasmic [2Fe-2S] and [4Fe-4S] proteins. First, a [2Fe-2S] cluster is transiently assembled on the scaffold protein ISU1. In a second step, the cluster is released from ISU1, transferred to a glutaredoxin, followed by the formation of mitochondrial [2Fe-2S] proteins, the synthesis of [4Fe-4S] clusters and their target-specific insertion into the recipient apoproteins. Cluster assembly on ISU1 depends on the function of the cysteine desulfurase complex NFS1-ISD11, which serves as the sulfur donor for cluster synthesis, the iron-binding protein frataxin as the putative iron donor, and the electron transfer chain comprised of ferredoxin reductase and ferredoxin, which receive their electrons from NADH. This Kluyveromyces lactis (strain ATCC 8585 / CBS 2359 / DSM 70799 / NBRC 1267 / NRRL Y-1140 / WM37) (Yeast) protein is Iron sulfur cluster assembly protein 1, mitochondrial (ISU1).